Here is a 317-residue protein sequence, read N- to C-terminus: Taste receptor type 2 member 14 (317 aa).

The Extracellular segment spans residues 1-7 (MGGVIKS). The chain crosses the membrane as a helical span at residues 8–28 (IFTFVLIVEFIIGNLGNSFIA). The Cytoplasmic portion of the chain corresponds to 29–55 (LVNCIDWVKGRKISSVDRILTALAISR). A helical membrane pass occupies residues 56–76 (ISLVWLIFGSWCVSVFFPALF). At 77–87 (ATEKMFRMLTN) the chain is on the extracellular side. 2 residues coordinate cholesterol: threonine 86 and tryptophan 89. The helical transmembrane segment at 88–108 (IWTVINHFSVWLATGLGTFYF) threads the bilayer. Over 109–129 (LKIANFSNSIFLYLKWRVKKV) the chain is Cytoplasmic. Residues 130 to 150 (VLVLLLVTSVFLFLNIALINI) traverse the membrane as a helical segment. At 151 to 184 (HINASINGYRRNKTCSSDSSNFTRFSSLIVLTST) the chain is on the extracellular side. 3 N-linked (GlcNAc...) asparagine glycosylation sites follow: asparagine 153, asparagine 162, and asparagine 171. Position 180 (valine 180) interacts with cholesterol. The helical transmembrane segment at 185–205 (VFIFIPFTLSLAMFLLLIFSM) threads the bilayer. The Cytoplasmic segment spans residues 206–232 (WKHRKKMQHTVKISGDASTKAHRGVKS). The chain crosses the membrane as a helical span at residues 233–253 (VITFFLLYAIFSLSFFISVWT). The Extracellular portion of the chain corresponds to 254–261 (SERLEENL). The chain crosses the membrane as a helical span at residues 262 to 282 (IILSQVMGMAYPSCHSCVLIL). 2 residues coordinate cholesterol: serine 265 and methionine 268. At 283–317 (GNKKLRQASLSVLLWLRYMFKDGEPSGHKEFRESS) the chain is on the cytoplasmic side.

It belongs to the G-protein coupled receptor T2R family. In terms of assembly, core component of the TAS2R14-GNAI1 complex, consisting of TAS2R14, GNAI1, GNB1 and GNG2; within the complex interacts with GNAI1. Core component of the TAS2R14-GNAT3 complex, consisting of TAS2R14, GNAT3, GNB1 and GNG2; within the complex interacts with GNAT3. Core component of the TAS2R14-GNAS2 complex, consisting of TAS2R14, GNAS2, GNB1 and GNG2; within the complex interacts with GNAS2. In terms of tissue distribution, highly expressed in cerebellum, pancreas, small intestine and thymus; also expressed in adipose, aorta, skin and tongue, but at significantly lower levels. Expressed in subsets of taste receptor cells of the tongue and palate epithelium and exclusively in gustducin-positive cells. Expressed in testis.

The protein localises to the membrane. It carries out the reaction Ca(2+)(in) = Ca(2+)(out). The enzyme catalyses 3',5'-cyclic AMP(in) = 3',5'-cyclic AMP(out). Basal activity is enhanced by binding to bitter tastants, such as flufenamic acid and aristolochic acid. Regulated by cholesterol in a concentration-dependent manner. In terms of biological role, gustducin-linked G-protein coupled receptor that plays a role in the perception of bitterness. The activity of this receptor stimulates GNAT3, activating the gustducin G-protein pathway. Likely plays a role in sensing the chemical composition of the gastrointestinal content and other extra-oral tissues via the inhibitory G-protein pathways. The protein is Taste receptor type 2 member 14 (TAS2R14) of Homo sapiens (Human).